Consider the following 249-residue polypeptide: Glutathione S-transferase S1 (249 aa).

Positions 1-38 are enriched in low complexity; it reads MADEAQAPPAEGAPPAEGEAPPPAEGAEGAVEGGEAAP. The segment at 1–42 is disordered; it reads MADEAQAPPAEGAPPAEGEAPPPAEGAEGAVEGGEAAPPAEP. One can recognise a GST N-terminal domain in the interval 48–125; sequence HSYTLFYFNV…FLAKTVGLCG (78 aa). Residues Tyr54, Trp85, Lys89, 96–97, and 109–110 each bind glutathione; these read QM and QS. The GST C-terminal domain maps to 127–249; the sequence is TPWEDLQIDI…WIEKRPVTEV (123 aa).

It belongs to the GST superfamily. Sigma family. In terms of assembly, homodimer.

The catalysed reaction is RX + glutathione = an S-substituted glutathione + a halide anion + H(+). Its function is as follows. Conjugation of reduced glutathione to a wide number of exogenous and endogenous hydrophobic electrophiles. May be involved in the detoxification of metabolites produced during cellular division and morphogenesis. This is Glutathione S-transferase S1 from Drosophila melanogaster (Fruit fly).